Consider the following 578-residue polypeptide: Proline--tRNA ligase (578 aa).

This sequence belongs to the class-II aminoacyl-tRNA synthetase family. ProS type 1 subfamily. Homodimer.

It is found in the cytoplasm. The catalysed reaction is tRNA(Pro) + L-proline + ATP = L-prolyl-tRNA(Pro) + AMP + diphosphate. Catalyzes the attachment of proline to tRNA(Pro) in a two-step reaction: proline is first activated by ATP to form Pro-AMP and then transferred to the acceptor end of tRNA(Pro). As ProRS can inadvertently accommodate and process non-cognate amino acids such as alanine and cysteine, to avoid such errors it has two additional distinct editing activities against alanine. One activity is designated as 'pretransfer' editing and involves the tRNA(Pro)-independent hydrolysis of activated Ala-AMP. The other activity is designated 'posttransfer' editing and involves deacylation of mischarged Ala-tRNA(Pro). The misacylated Cys-tRNA(Pro) is not edited by ProRS. The polypeptide is Proline--tRNA ligase (Paraburkholderia phymatum (strain DSM 17167 / CIP 108236 / LMG 21445 / STM815) (Burkholderia phymatum)).